The sequence spans 509 residues: ATP synthase subunit alpha (509 aa).

171 to 178 (GDRKTGKT) lines the ATP pocket.

It belongs to the ATPase alpha/beta chains family. F-type ATPases have 2 components, CF(1) - the catalytic core - and CF(0) - the membrane proton channel. CF(1) has five subunits: alpha(3), beta(3), gamma(1), delta(1), epsilon(1). CF(0) has three main subunits: a(1), b(2) and c(9-12). The alpha and beta chains form an alternating ring which encloses part of the gamma chain. CF(1) is attached to CF(0) by a central stalk formed by the gamma and epsilon chains, while a peripheral stalk is formed by the delta and b chains.

It is found in the cell inner membrane. The catalysed reaction is ATP + H2O + 4 H(+)(in) = ADP + phosphate + 5 H(+)(out). In terms of biological role, produces ATP from ADP in the presence of a proton gradient across the membrane. The alpha chain is a regulatory subunit. The sequence is that of ATP synthase subunit alpha from Ehrlichia canis (strain Jake).